We begin with the raw amino-acid sequence, 193 residues long: Peptidyl-tRNA hydrolase (193 aa).

Y17 is a binding site for tRNA. The Proton acceptor role is filled by H22. 3 residues coordinate tRNA: F68, N70, and N115.

Belongs to the PTH family. As to quaternary structure, monomer.

It is found in the cytoplasm. The catalysed reaction is an N-acyl-L-alpha-aminoacyl-tRNA + H2O = an N-acyl-L-amino acid + a tRNA + H(+). Its function is as follows. Hydrolyzes ribosome-free peptidyl-tRNAs (with 1 or more amino acids incorporated), which drop off the ribosome during protein synthesis, or as a result of ribosome stalling. Functionally, catalyzes the release of premature peptidyl moieties from peptidyl-tRNA molecules trapped in stalled 50S ribosomal subunits, and thus maintains levels of free tRNAs and 50S ribosomes. The protein is Peptidyl-tRNA hydrolase of Alteromonas mediterranea (strain DSM 17117 / CIP 110805 / LMG 28347 / Deep ecotype).